Here is an 85-residue protein sequence, read N- to C-terminus: Putative plasmid stability protein y4jJ (85 aa).

Residues Glu-66–Pro-78 are compositionally biased toward basic and acidic residues. A disordered region spans residues Glu-66 to Glu-85.

To P.syringae pv tomato plasmid stability protein StbC.

In terms of biological role, involved in plasmid stability. The protein is Putative plasmid stability protein y4jJ of Sinorhizobium fredii (strain NBRC 101917 / NGR234).